We begin with the raw amino-acid sequence, 319 residues long: tRNA uridine(34) hydroxylase (319 aa).

One can recognise a Rhodanese domain in the interval 127–221 (KQEDTVIIDA…YGKDPEVQGE (95 aa)). Cys-181 acts as the Cysteine persulfide intermediate in catalysis.

This sequence belongs to the TrhO family.

The enzyme catalyses uridine(34) in tRNA + AH2 + O2 = 5-hydroxyuridine(34) in tRNA + A + H2O. Catalyzes oxygen-dependent 5-hydroxyuridine (ho5U) modification at position 34 in tRNAs. The sequence is that of tRNA uridine(34) hydroxylase from Bacillus cereus (strain B4264).